Consider the following 253-residue polypeptide: Flap endonuclease Xni (253 aa).

Residue D104 participates in Mg(2+) binding. The 5'-3' exonuclease domain occupies 160–250 (VAPQQLTDFW…HGNLQQLRLN (91 aa)). The K(+) site is built by L171, A172, P180, I182, and I185. Positions 184 to 189 (GIGAKT) are interaction with DNA.

The protein belongs to the Xni family. Requires Mg(2+) as cofactor. The cofactor is K(+).

Its function is as follows. Has flap endonuclease activity. During DNA replication, flap endonucleases cleave the 5'-overhanging flap structure that is generated by displacement synthesis when DNA polymerase encounters the 5'-end of a downstream Okazaki fragment. In Edwardsiella ictaluri (strain 93-146), this protein is Flap endonuclease Xni.